A 271-amino-acid chain; its full sequence is Insulin-like growth factor-binding protein 5 (271 aa).

Residues 1–19 (MVLTAVLLLLAACAGSAQG) form the signal peptide. In terms of domain architecture, IGFBP N-terminal spans 22 to 102 (SFVHCEPCDE…LHGRGVCLNE (81 aa)). Cystine bridges form between Cys-26–Cys-52, Cys-29–Cys-54, Cys-37–Cys-55, Cys-44–Cys-58, Cys-66–Cys-79, and Cys-73–Cys-99. Positions 109 to 121 (AKIERDSREHEEP) are enriched in basic and acidic residues. A disordered region spans residues 109 to 129 (AKIERDSREHEEPTTSEMAEE). Ser-115 is subject to Phosphoserine. One can recognise a Thyroglobulin type-1 domain in the interval 188–262 (QGPCRRHMEA…MEYVDGDFQC (75 aa)). 3 disulfides stabilise this stretch: Cys-191–Cys-218, Cys-229–Cys-240, and Cys-242–Cys-262.

In terms of assembly, interacts with IGF1; this interaction enhances the growth stimulatory effects of IGF1 on fibroblasts. Interacts with CAV1; this interaction allows trafficking of IGFBP5 from the plasma membrane to the nucleus. Interacts with NCL; this interaction is necessary for IGFBP5 localization to the nucleus.

The protein localises to the secreted. It localises to the cytoplasm. The protein resides in the nucleus. Multifunctional protein that plays a critical role in regulating the availability of IGFs to their receptors and thereby regulates IGF-mediated cellular processes including proliferation, differentiation, and apoptosis in a cell-type specific manner. Increases the cell proliferation of osteoblasts, intestinal smooth muscle cells and neuroblastoma cells. Enhances adhesion and survival of epithelial cells but decreases adhesion of mesenchymal cells. Once secreted, acts as a major mediator of mTORC1-dependent feedback inhibition of IGF1 signaling. Also plays a role in the induction of extracellular matrix (ECM) production and deposition independently of its nuclear translocation and binding to IGFs. Acts itself as a growth factor that can act independently of IGFs to regulate bone formation. Acts as a ligand for the ROR1 receptor which triggers formation of ROR1/HER2 heterodimer to enhance CREB oncogenic signaling. The polypeptide is Insulin-like growth factor-binding protein 5 (IGFBP5) (Bos taurus (Bovine)).